The primary structure comprises 442 residues: MPAVLLVLYVNPPPSVCILTQKLSLGLYNQWWRVCRSVPPPWYVFFNKRSMSTFKLMMDGRLVFAMAIAILSVVLSCGTCEKAKRAVRGRQDRPKEFPPPRYNYTILTRYNATALASPFINDQVKNVDLRIVTATRPCEMIALIAKTNIDSILKELAAAQKTYSARLTWFKIMPTCATPIHDVSYMKCNPKLSFAMCDERSDILWQASLITMAAETDDELGLVLAAPAHSASGLYRRVIEIDGRRIYTDFSVTIPSERCPIAFELNFGNPDRCKTPEQYSRGEVFTRRFLGEFNFPQGEHMTWVKFWFVYDGGNLPVQFYEAQAFARPVPPDNHPGFDSVESEITQNKTDPKPGQADPKPNQPFKWPSIKHLVPRLDEVDEVIEPVTKPPKTSKSNSTFVGISVGLGIAGLVLVGVILYVCLRRKKELKVCTERLDSPTLDL.

Residues 1–19 (MPAVLLVLYVNPPPSVCIL) form the signal peptide. At 20-405 (TQKLSLGLYN…NSTFVGISVG (386 aa)) the chain is on the virion surface side. N103 and N111 each carry an N-linked (GlcNAc...) asparagine; by host glycan. Cystine bridges form between C138/C259, C176/C273, and C188/C197. Residues 331-364 (PDNHPGFDSVESEITQNKTDPKPGQADPKPNQPF) form a disordered region. N-linked (GlcNAc...) asparagine; by host glycosylation is found at N347 and N396. Residues 406-422 (LGIAGLVLVGVILYVCL) form a helical membrane-spanning segment. Residues 423-442 (RRKKELKVCTERLDSPTLDL) lie on the Intravirion side of the membrane.

The protein belongs to the herpesviridae glycoprotein D family.

Its subcellular location is the virion membrane. In terms of biological role, envelope glycoprotein that binds to host cell entry receptors, promoting the virus entry into host cells. May trigger fusion with host membrane, by recruiting the fusion machinery composed of gB and gH/gL. The polypeptide is Envelope glycoprotein D (gD) (Equine herpesvirus 1 (strain Kentucky A) (EHV-1)).